The chain runs to 161 residues: NADH-quinone oxidoreductase subunit I (161 aa).

2 consecutive 4Fe-4S ferredoxin-type domains span residues 52–82 and 92–121; these read LRRY…IEAK and TKYD…EGPN. [4Fe-4S] cluster contacts are provided by C62, C65, C68, C72, C101, C104, C107, and C111.

The protein belongs to the complex I 23 kDa subunit family. As to quaternary structure, NDH-1 is composed of 14 different subunits. Subunits NuoA, H, J, K, L, M, N constitute the membrane sector of the complex. [4Fe-4S] cluster serves as cofactor.

The protein localises to the cell inner membrane. The catalysed reaction is a quinone + NADH + 5 H(+)(in) = a quinol + NAD(+) + 4 H(+)(out). Its function is as follows. NDH-1 shuttles electrons from NADH, via FMN and iron-sulfur (Fe-S) centers, to quinones in the respiratory chain. The immediate electron acceptor for the enzyme in this species is believed to be ubiquinone. Couples the redox reaction to proton translocation (for every two electrons transferred, four hydrogen ions are translocated across the cytoplasmic membrane), and thus conserves the redox energy in a proton gradient. In Orientia tsutsugamushi (strain Boryong) (Rickettsia tsutsugamushi), this protein is NADH-quinone oxidoreductase subunit I.